A 104-amino-acid chain; its full sequence is Flagellar hook-basal body complex protein FliE (104 aa).

This sequence belongs to the FliE family.

The protein localises to the bacterial flagellum basal body. The polypeptide is Flagellar hook-basal body complex protein FliE (Escherichia coli O139:H28 (strain E24377A / ETEC)).